A 188-amino-acid polypeptide reads, in one-letter code: dCTP deaminase (188 aa).

DCTP contacts are provided by residues lysine 111 to arginine 116, threonine 135 to glutamate 137, glutamine 156, tyrosine 170, and glutamine 180. Residue glutamate 137 is the Proton donor/acceptor of the active site.

It belongs to the dCTP deaminase family. As to quaternary structure, homotrimer.

The catalysed reaction is dCTP + H2O + H(+) = dUTP + NH4(+). Its pathway is pyrimidine metabolism; dUMP biosynthesis; dUMP from dCTP (dUTP route): step 1/2. Catalyzes the deamination of dCTP to dUTP. This chain is dCTP deaminase, found in Pseudomonas savastanoi pv. phaseolicola (strain 1448A / Race 6) (Pseudomonas syringae pv. phaseolicola (strain 1448A / Race 6)).